The primary structure comprises 527 residues: Phosphoenolpyruvate carboxykinase (ATP) (527 aa).

Residues arginine 56, tyrosine 192, and lysine 198 each coordinate substrate. Residues lysine 198, histidine 217, and 233–241 (GLSGTGKTT) contribute to the ATP site. 2 residues coordinate Mn(2+): lysine 198 and histidine 217. Aspartate 254 serves as a coordination point for Mn(2+). ATP contacts are provided by glutamate 282, arginine 319, and threonine 444. Arginine 319 contacts substrate.

It belongs to the phosphoenolpyruvate carboxykinase (ATP) family. It depends on Mn(2+) as a cofactor.

It is found in the cytoplasm. It catalyses the reaction oxaloacetate + ATP = phosphoenolpyruvate + ADP + CO2. It functions in the pathway carbohydrate biosynthesis; gluconeogenesis. Involved in the gluconeogenesis. Catalyzes the conversion of oxaloacetate (OAA) to phosphoenolpyruvate (PEP) through direct phosphoryl transfer between the nucleoside triphosphate and OAA. The protein is Phosphoenolpyruvate carboxykinase (ATP) of Bacillus subtilis (strain 168).